The chain runs to 643 residues: Methyl-accepting chemotaxis protein McpA (643 aa).

Residues 24–44 (ILLSACGVVVLAFALFTLYND) traverse the membrane as a helical segment. Residues 49–273 (NTIRQNIEAS…GLPSAQWYIG (225 aa)) enclose the Cache domain. A helical membrane pass occupies residues 293–313 (IIAMLIAVAAIAGLLGLLIPV). The region spanning 312–366 (PVLMSPLTTMGRAMRDIAEGEGDLTRRLAVQNKDEFGELATSFNRFVERIHASIS) is the HAMP domain. The Methyl-accepting transducer domain maps to 371-607 (ATRLVHDLSE…SLNLDITQIN (237 aa)).

The protein belongs to the methyl-accepting chemotaxis (MCP) protein family.

The protein resides in the cell membrane. In terms of biological role, chemotactic-signal transducers respond to changes in the concentration of attractants and repellents in the environment, transduce a signal from the outside to the inside of the cell, and facilitate sensory adaptation through the variation of the level of methylation. McpA is a chemoreceptor that binds to 12 different L-amino acids and mediates chemotaxis toward these amino acids. The sequence is that of Methyl-accepting chemotaxis protein McpA from Pseudomonas putida (strain ATCC 47054 / DSM 6125 / CFBP 8728 / NCIMB 11950 / KT2440).